A 1045-amino-acid chain; its full sequence is Bifunctional glutamine synthetase adenylyltransferase/adenylyl-removing enzyme (1045 aa).

Positions 1–527 are adenylyl removase; sequence MSGPLRSERK…LHSQLFYRPL (527 aa). Positions 533–1045 are adenylyl transferase; it reads NLSADAIRLS…GVDSMEQREF (513 aa).

It belongs to the GlnE family. Mg(2+) serves as cofactor.

It catalyses the reaction [glutamine synthetase]-O(4)-(5'-adenylyl)-L-tyrosine + phosphate = [glutamine synthetase]-L-tyrosine + ADP. The catalysed reaction is [glutamine synthetase]-L-tyrosine + ATP = [glutamine synthetase]-O(4)-(5'-adenylyl)-L-tyrosine + diphosphate. In terms of biological role, involved in the regulation of glutamine synthetase GlnA, a key enzyme in the process to assimilate ammonia. When cellular nitrogen levels are high, the C-terminal adenylyl transferase (AT) inactivates GlnA by covalent transfer of an adenylyl group from ATP to specific tyrosine residue of GlnA, thus reducing its activity. Conversely, when nitrogen levels are low, the N-terminal adenylyl removase (AR) activates GlnA by removing the adenylyl group by phosphorolysis, increasing its activity. The regulatory region of GlnE binds the signal transduction protein PII (GlnB) which indicates the nitrogen status of the cell. The polypeptide is Bifunctional glutamine synthetase adenylyltransferase/adenylyl-removing enzyme (Corynebacterium glutamicum (strain ATCC 13032 / DSM 20300 / JCM 1318 / BCRC 11384 / CCUG 27702 / LMG 3730 / NBRC 12168 / NCIMB 10025 / NRRL B-2784 / 534)).